The primary structure comprises 332 residues: Holliday junction branch migration complex subunit RuvB (332 aa).

The tract at residues Met1–Tyr181 is large ATPase domain (RuvB-L). ATP is bound by residues Leu20, Arg21, Gly62, Lys65, Thr66, Thr67, Glu128–Phe130, Arg171, Tyr181, and Arg218. Thr66 is a Mg(2+) binding site. The interval Ala182–Asp252 is small ATPAse domain (RuvB-S). Residues His255–Lys332 form a head domain (RuvB-H) region. DNA contacts are provided by Arg291, Arg310, Arg312, and Arg315.

It belongs to the RuvB family. In terms of assembly, homohexamer. Forms an RuvA(8)-RuvB(12)-Holliday junction (HJ) complex. HJ DNA is sandwiched between 2 RuvA tetramers; dsDNA enters through RuvA and exits via RuvB. An RuvB hexamer assembles on each DNA strand where it exits the tetramer. Each RuvB hexamer is contacted by two RuvA subunits (via domain III) on 2 adjacent RuvB subunits; this complex drives branch migration. In the full resolvosome a probable DNA-RuvA(4)-RuvB(12)-RuvC(2) complex forms which resolves the HJ.

It localises to the cytoplasm. It carries out the reaction ATP + H2O = ADP + phosphate + H(+). Its function is as follows. The RuvA-RuvB-RuvC complex processes Holliday junction (HJ) DNA during genetic recombination and DNA repair, while the RuvA-RuvB complex plays an important role in the rescue of blocked DNA replication forks via replication fork reversal (RFR). RuvA specifically binds to HJ cruciform DNA, conferring on it an open structure. The RuvB hexamer acts as an ATP-dependent pump, pulling dsDNA into and through the RuvAB complex. RuvB forms 2 homohexamers on either side of HJ DNA bound by 1 or 2 RuvA tetramers; 4 subunits per hexamer contact DNA at a time. Coordinated motions by a converter formed by DNA-disengaged RuvB subunits stimulates ATP hydrolysis and nucleotide exchange. Immobilization of the converter enables RuvB to convert the ATP-contained energy into a lever motion, pulling 2 nucleotides of DNA out of the RuvA tetramer per ATP hydrolyzed, thus driving DNA branch migration. The RuvB motors rotate together with the DNA substrate, which together with the progressing nucleotide cycle form the mechanistic basis for DNA recombination by continuous HJ branch migration. Branch migration allows RuvC to scan DNA until it finds its consensus sequence, where it cleaves and resolves cruciform DNA. The chain is Holliday junction branch migration complex subunit RuvB from Streptococcus pneumoniae serotype 19F (strain G54).